The primary structure comprises 421 residues: Gamma-glutamyl phosphate reductase (421 aa).

The protein belongs to the gamma-glutamyl phosphate reductase family.

The protein localises to the cytoplasm. The enzyme catalyses L-glutamate 5-semialdehyde + phosphate + NADP(+) = L-glutamyl 5-phosphate + NADPH + H(+). It participates in amino-acid biosynthesis; L-proline biosynthesis; L-glutamate 5-semialdehyde from L-glutamate: step 2/2. Functionally, catalyzes the NADPH-dependent reduction of L-glutamate 5-phosphate into L-glutamate 5-semialdehyde and phosphate. The product spontaneously undergoes cyclization to form 1-pyrroline-5-carboxylate. This chain is Gamma-glutamyl phosphate reductase, found in Pseudomonas aeruginosa (strain UCBPP-PA14).